A 340-amino-acid chain; its full sequence is Myb-related protein Zm1 (340 aa).

HTH myb-type domains follow at residues 11-63 (KVGL…INYL) and 64-118 (RPDL…KKKV). 2 DNA-binding regions (H-T-H motif) span residues 39-63 (WRAL…INYL) and 91-114 (WSKI…NTHL). The span at 116 to 126 (KKVAQREKKKA) shows a compositional bias: basic residues. Disordered stretches follow at residues 116–173 (KKVA…DATD) and 190–209 (DGAP…SSLT). Residues 133–166 (AGTPATAPLSSATSSTTTHNSSGGSDSGDQCGTS) show a composition bias toward low complexity.

The protein localises to the nucleus. Its function is as follows. Transcription factor that positively regulates genes involved in anthocyanin biosynthesis such as A1. The chain is Myb-related protein Zm1 from Zea mays (Maize).